The primary structure comprises 137 residues: NADH-quinone oxidoreductase subunit A 1 (137 aa).

3 consecutive transmembrane segments (helical) span residues 14 to 34, 66 to 86, and 95 to 115; these read FAAF…VSAL, FYLV…LFAW, and WAGL…LVYL.

The protein belongs to the complex I subunit 3 family. NDH-1 is composed of 13 different subunits. Subunits NuoA, H, J, K, L, M, N constitute the membrane sector of the complex.

The protein localises to the cell inner membrane. The catalysed reaction is a quinone + NADH + 5 H(+)(in) = a quinol + NAD(+) + 4 H(+)(out). In terms of biological role, NDH-1 shuttles electrons from NADH, via FMN and iron-sulfur (Fe-S) centers, to quinones in the respiratory chain. The immediate electron acceptor for the enzyme in this species is believed to be ubiquinone. Couples the redox reaction to proton translocation (for every two electrons transferred, four hydrogen ions are translocated across the cytoplasmic membrane), and thus conserves the redox energy in a proton gradient. This chain is NADH-quinone oxidoreductase subunit A 1, found in Pseudomonas paraeruginosa (strain DSM 24068 / PA7) (Pseudomonas aeruginosa (strain PA7)).